We begin with the raw amino-acid sequence, 318 residues long: NADH-ubiquinone oxidoreductase chain 1 (318 aa).

Transmembrane regions (helical) follow at residues 2–22 (FMVN…FLTL), 76–96 (TLAL…HPLI), 98–118 (FNLG…SILW), 140–160 (ISYE…SGSF), 171–191 (HSWL…STLA), 217–237 (AGSF…MNAL), 253–273 (ELYT…FLWI), and 294–314 (LPLT…TSGI).

Belongs to the complex I subunit 1 family. As to quaternary structure, core subunit of respiratory chain NADH dehydrogenase (Complex I) which is composed of 45 different subunits.

It is found in the mitochondrion inner membrane. The enzyme catalyses a ubiquinone + NADH + 5 H(+)(in) = a ubiquinol + NAD(+) + 4 H(+)(out). In terms of biological role, core subunit of the mitochondrial membrane respiratory chain NADH dehydrogenase (Complex I) which catalyzes electron transfer from NADH through the respiratory chain, using ubiquinone as an electron acceptor. Essential for the catalytic activity and assembly of complex I. The polypeptide is NADH-ubiquinone oxidoreductase chain 1 (MT-ND1) (Ateles paniscus (Black spider monkey)).